We begin with the raw amino-acid sequence, 601 residues long: MTDRVLPEQIRNFGIIAHVDHGKSTLADRILQLTGAVSDRDMREQYLDRLYIERERGITIKSQAVTLQWDCDATQYVLNMVDTPGHVDFTYEVSRSLAACEAAVILVDATQGVEAQTLANLHLAIENNLLIIPVLSKVDLPSADVEGATLELSEVLECRVEDVMHVSGKTGYGVKELLDLIVRKAPPPKGDVTSAPRALIFDSIYDSYRGVVTYVKMCDGTIRVGDKIRMMSTGAEHTLLEVGVSNPEPQSRHSLSVGEVGYFITGVKDVRKSRVGDTITTDTHTATVPLPGYSNPKPMVFSGIYPLNGNEYSALREGLDRLKLSDASIVYTPETSAALGFGFRCGFLGLLHMEIVSERLNREFGLATISTAPSVAYEITPDGEKTLVVMNPSDFPSGKIKEIKEPTVKVSILSPKEYIGSIMELCQARRGVMQGIEYFGSVRAELIYVMPLAEIVFDFFDSLKSRTKGYASFDYNPEGSQPADLVKVDILLQGNKVDAFSAIVHSSKAYSYGSSISKRLSELIPRQQFEVPIQAAIGSRVVARETIRAVRKDVVAKCYGGDITRKRKLLEKQKQGKARMKLIGRVEVPQEVFVATLSSYK.

The tr-type G domain occupies 8–189; it reads EQIRNFGIIA…LIVRKAPPPK (182 aa). 20-25 lines the GTP pocket; that stretch reads DHGKST.

The protein belongs to the TRAFAC class translation factor GTPase superfamily. Classic translation factor GTPase family. LepA subfamily.

It is found in the cell membrane. The enzyme catalyses GTP + H2O = GDP + phosphate + H(+). In terms of biological role, required for accurate and efficient protein synthesis under certain stress conditions. May act as a fidelity factor of the translation reaction, by catalyzing a one-codon backward translocation of tRNAs on improperly translocated ribosomes. Back-translocation proceeds from a post-translocation (POST) complex to a pre-translocation (PRE) complex, thus giving elongation factor G a second chance to translocate the tRNAs correctly. Binds to ribosomes in a GTP-dependent manner. This Tropheryma whipplei (strain Twist) (Whipple's bacillus) protein is Elongation factor 4.